The chain runs to 237 residues: Glutathione-independent glyoxalase HSP31 (237 aa).

Active-site residues include Cys-138, His-139, and Glu-170. Residue Cys-138 is modified to Cysteine sulfinic acid (-SO2H).

Belongs to the peptidase C56 family. HSP31-like subfamily. In terms of assembly, homodimer. Post-translationally, cys-138 is easily oxidized to sulfinic acid.

The protein localises to the cytoplasm. It localises to the P-body. It catalyses the reaction methylglyoxal + H2O = (R)-lactate + H(+). In terms of biological role, catalyzes the conversion of methylglyoxal (MG) to D-lactate in a single glutathione (GSH)-independent step. May play a role in detoxifying endogenously produced glyoxals. Involved in protection against reactive oxygen species (ROS). Important for viability in stationary phase. May negatively regulate TORC1 in response to nutrient limitation. This Saccharomyces cerevisiae (strain ATCC 204508 / S288c) (Baker's yeast) protein is Glutathione-independent glyoxalase HSP31.